The primary structure comprises 60 residues: Putative SERF-like protein (60 aa).

The span at 1–53 (MTRGNQRDLARQKNQKKQADLTKGKRTDNLTVEQRKARDAELMREKQKKKEEA) shows a compositional bias: basic and acidic residues. The disordered stretch occupies residues 1-60 (MTRGNQRDLARQKNQKKQADLTKGKRTDNLTVEQRKARDAELMREKQKKKEEAAAAGTSK).

Belongs to the SERF family.

This is Putative SERF-like protein from Drosophila melanogaster (Fruit fly).